The following is a 230-amino-acid chain: MGQKINPTGFRLAVTKDWASKWFAKSTDFSTVLKQDIDVRNYLRQKLANASVGRVIIERPAKSARITIHSARPGVVIGKKGEDIEVLKRDLQVLMGVPIHVNIEEIRRPELDAQIIADGIAQQLEKRVQFRRAMKRAMQNAMRSGAKGIKIMTSGRLNGADIARSEWYREGRVPLHTLRANVDYATSEAHTTYGVLGLKVWVYTEGNIKSSKPEHESKQRKAGRRNAAAN.

The KH type-2 domain occupies 39–107; that stretch reads VRNYLRQKLA…PIHVNIEEIR (69 aa). A disordered region spans residues 210 to 230; the sequence is SSKPEHESKQRKAGRRNAAAN.

This sequence belongs to the universal ribosomal protein uS3 family. In terms of assembly, part of the 30S ribosomal subunit. Forms a tight complex with proteins S10 and S14.

Functionally, binds the lower part of the 30S subunit head. Binds mRNA in the 70S ribosome, positioning it for translation. The protein is Small ribosomal subunit protein uS3 of Neisseria gonorrhoeae (strain ATCC 700825 / FA 1090).